The sequence spans 272 residues: DNA repair protein RecO (272 aa).

It belongs to the RecO family.

In terms of biological role, involved in DNA repair and RecF pathway recombination. In Latilactobacillus sakei subsp. sakei (strain 23K) (Lactobacillus sakei subsp. sakei), this protein is DNA repair protein RecO.